The following is a 109-amino-acid chain: Large ribosomal subunit protein uL22 (109 aa).

It belongs to the universal ribosomal protein uL22 family. In terms of assembly, part of the 50S ribosomal subunit.

Its function is as follows. This protein binds specifically to 23S rRNA; its binding is stimulated by other ribosomal proteins, e.g. L4, L17, and L20. It is important during the early stages of 50S assembly. It makes multiple contacts with different domains of the 23S rRNA in the assembled 50S subunit and ribosome. In terms of biological role, the globular domain of the protein is located near the polypeptide exit tunnel on the outside of the subunit, while an extended beta-hairpin is found that lines the wall of the exit tunnel in the center of the 70S ribosome. The chain is Large ribosomal subunit protein uL22 from Psychrobacter sp. (strain PRwf-1).